The primary structure comprises 461 residues: Probable tubulin polyglutamylase TTLL9 (461 aa).

The interval 1–21 (MSRPKNQNYKGHGLQKGKERE) is disordered. Residues 22-402 (QRASIRFKTT…EARLTGREKR (381 aa)) form the TTL domain. ATP is bound by residues Lys-149 and 155-156 (QG). Gln-155 contributes to the a protein binding site. A disordered region spans residues 182 to 208 (SLEAQPARNTVNPSGSHDTRSSDDQKD). Positions 188–197 (ARNTVNPSGS) are enriched in polar residues. Positions 198–208 (HDTRSSDDQKD) are enriched in basic and acidic residues. ATP is bound by residues 218-221 (QRYI) and 231-233 (KFD). Arg-257 contributes to the L-glutamate binding site. Residue 276–277 (TN) participates in ATP binding. An L-glutamate-binding site is contributed by Lys-294. Positions 348, 361, and 363 each coordinate Mg(2+). Lys-379 contacts L-glutamate.

This sequence belongs to the tubulin--tyrosine ligase family. Requires Mg(2+) as cofactor.

The protein resides in the cytoplasm. It is found in the cytoskeleton. The protein localises to the cilium basal body. It localises to the flagellum axoneme. The catalysed reaction is (L-glutamyl)(n)-gamma-L-glutamyl-L-glutamyl-[protein] + L-glutamate + ATP = (L-glutamyl)(n+1)-gamma-L-glutamyl-L-glutamyl-[protein] + ADP + phosphate + H(+). Its function is as follows. Probable tubulin polyglutamylase that generates side chains of glutamate on the gamma-carboxyl group of specific glutamate residues within the C-terminal tail of target proteins. Similar to TTLL1, may acquire enzymatic activity only in complex with other proteins as it is most likely lacking domains important for autonomous activity. Mediates tubulin polyglutamylation which induces establishment of microtubule heterogeneity in sperm flagella, thereby playing a role in normal motile flagella axoneme structure and sperm flagella beating pattern. This chain is Probable tubulin polyglutamylase TTLL9 (TTLL9), found in Bos taurus (Bovine).